Reading from the N-terminus, the 645-residue chain is Transcription factor AN6788 (645 aa).

The tract at residues 1–21 (MPQKAQPQPRESPFKPARQQP) is disordered. Positions 25-52 (CEECRKRKARCDRAKPQCGSCMMTGRVC) form a DNA-binding region, zn(2)-C6 fungal-type. Positions 113-131 (PDFEPNSHPRHSQSHDRRQ) are enriched in basic and acidic residues. The tract at residues 113-170 (PDFEPNSHPRHSQSHDRRQQSGPDSSPDTQHELPFLQSPPAARDADSAERALLPSPVS) is disordered.

It localises to the nucleus. Transcription factors AN6788 and AN6790 act in tandem to regulate the expression of the non-reducing polyketide synthase pkfA from the aspernidine A biosynthesis cluster. They do not control the expression of the other genes involved in aspernidine A biosynthesis, nor do they regulate the expression of the highly reducing polyketide synthase AN6791 and the esterase AN6793 with which they are predicted to form a secondary metabolite biosynthesis cluster. This is Transcription factor AN6788 from Emericella nidulans (strain FGSC A4 / ATCC 38163 / CBS 112.46 / NRRL 194 / M139) (Aspergillus nidulans).